Reading from the N-terminus, the 317-residue chain is Glycine--tRNA ligase alpha subunit (317 aa).

It belongs to the class-II aminoacyl-tRNA synthetase family. As to quaternary structure, tetramer of two alpha and two beta subunits.

The protein resides in the cytoplasm. It carries out the reaction tRNA(Gly) + glycine + ATP = glycyl-tRNA(Gly) + AMP + diphosphate. The polypeptide is Glycine--tRNA ligase alpha subunit (Pseudomonas fluorescens (strain ATCC BAA-477 / NRRL B-23932 / Pf-5)).